The chain runs to 250 residues: tRNA (guanine-N(1)-)-methyltransferase (250 aa).

S-adenosyl-L-methionine contacts are provided by residues G113 and 133–138 (IGDYVL).

This sequence belongs to the RNA methyltransferase TrmD family. As to quaternary structure, homodimer.

The protein localises to the cytoplasm. The enzyme catalyses guanosine(37) in tRNA + S-adenosyl-L-methionine = N(1)-methylguanosine(37) in tRNA + S-adenosyl-L-homocysteine + H(+). In terms of biological role, specifically methylates guanosine-37 in various tRNAs. The chain is tRNA (guanine-N(1)-)-methyltransferase from Photorhabdus laumondii subsp. laumondii (strain DSM 15139 / CIP 105565 / TT01) (Photorhabdus luminescens subsp. laumondii).